The chain runs to 37 residues: Large ribosomal subunit protein bL36c (37 aa).

This sequence belongs to the bacterial ribosomal protein bL36 family.

It is found in the plastid. It localises to the chloroplast. This is Large ribosomal subunit protein bL36c (rpl36) from Anthoceros angustus (Hornwort).